The sequence spans 394 residues: MKRQRNVNLLLMLVLLVAVGQMAQTIYIPAIADMARDLNVREGAVQSVMGAYLLTYGVSQLFYGPISDRVGRRPVILVGMSIFMLATLVAVTTSSLTVLIAASAMQGMGTGVGGVMARTLPRDLYERTQLRHANSLLNMGILVSPLLAPLIGGLLDTMWNWRACYLFLLVLCAGVTFSMARWMPETRPVDAPRTRLLTSYKTLFGNSGFNCYLLMLIGGLAGIAAFEACSGVLMGAVLGLSSMTVSILFILPIPAAFFGAWFAGRPNKRFSTLMWQSVICCLLAGLLMWIPDWFGVMNVWTLLVPAALFFFGAGMLFPLATSGAMEPFPFLAGTAGALVGGLQNIGSGVLASLSAMLPQTGQGSLGLLMTLMGLLIVLCWLPLATRMSHQGQPV.

The Cytoplasmic segment spans residues 1 to 8 (MKRQRNVN). Residues 9–29 (LLLMLVLLVAVGQMAQTIYIP) traverse the membrane as a helical segment. The Periplasmic portion of the chain corresponds to 30-46 (AIADMARDLNVREGAVQ). A helical transmembrane segment spans residues 47–67 (SVMGAYLLTYGVSQLFYGPIS). Topologically, residues 68–73 (DRVGRR) are cytoplasmic. The chain crosses the membrane as a helical span at residues 74–94 (PVILVGMSIFMLATLVAVTTS). Position 95 (S95) is a topological domain, periplasmic. The helical transmembrane segment at 96–116 (LTVLIAASAMQGMGTGVGGVM) threads the bilayer. Residues 117–134 (ARTLPRDLYERTQLRHAN) lie on the Cytoplasmic side of the membrane. A helical membrane pass occupies residues 135–155 (SLLNMGILVSPLLAPLIGGLL). Over 156–162 (DTMWNWR) the chain is Periplasmic. A helical membrane pass occupies residues 163–183 (ACYLFLLVLCAGVTFSMARWM). At 184–212 (PETRPVDAPRTRLLTSYKTLFGNSGFNCY) the chain is on the cytoplasmic side. The helical transmembrane segment at 213–233 (LLMLIGGLAGIAAFEACSGVL) threads the bilayer. Over 234-242 (MGAVLGLSS) the chain is Periplasmic. Residues 243–263 (MTVSILFILPIPAAFFGAWFA) form a helical membrane-spanning segment. Over 264-276 (GRPNKRFSTLMWQ) the chain is Cytoplasmic. The helical transmembrane segment at 277-297 (SVICCLLAGLLMWIPDWFGVM) threads the bilayer. Residue N298 is a topological domain, periplasmic. Residues 299-319 (VWTLLVPAALFFFGAGMLFPL) form a helical membrane-spanning segment. Topologically, residues 320 to 329 (ATSGAMEPFP) are cytoplasmic. A helical transmembrane segment spans residues 330–350 (FLAGTAGALVGGLQNIGSGVL). Residues 351–364 (ASLSAMLPQTGQGS) are Periplasmic-facing. A helical membrane pass occupies residues 365 to 385 (LGLLMTLMGLLIVLCWLPLAT). Topologically, residues 386-394 (RMSHQGQPV) are cytoplasmic.

The protein belongs to the major facilitator superfamily.

The protein resides in the cell inner membrane. In terms of biological role, multidrug resistance pump that participates in a low energy shock adaptive response. This is Multidrug resistance protein D (emrD) from Escherichia coli (strain K12).